The following is a 360-amino-acid chain: Flavone O-methyltransferase 1 (360 aa).

Residue 127-133 participates in substrate binding; that stretch reads MNQDKVL. A substrate binding region spans residues 159–177; that stretch reads AFEYHGTDPRFNRVFNEGM. S-adenosyl-L-methionine-binding residues include glycine 205, aspartate 228, aspartate 248, methionine 249, and lysine 262. Histidine 266 functions as the Proton acceptor in the catalytic mechanism.

This sequence belongs to the class I-like SAM-binding methyltransferase superfamily. Cation-independent O-methyltransferase family. COMT subfamily. Homodimer.

In terms of biological role, flavone-specific O-methyltransferase with a preference for flavones &gt; flavonols. Active with tricetin, luteolin, quercitin and eriodictyol. Very low activity with phenylpropanoids (5-hydroxyferulic acid and caffeic acid). Catalyzes the sequential O-methylation of tricetin via 3'-O-methyltricetin, 3',5'-O-methyltricetin to 3',4',5'-O-trimethyltricetin. The protein is Flavone O-methyltransferase 1 (OMT1) of Triticum aestivum (Wheat).